We begin with the raw amino-acid sequence, 144 residues long: Large ribosomal subunit protein uL11 (144 aa).

Belongs to the universal ribosomal protein uL11 family. As to quaternary structure, part of the ribosomal stalk of the 50S ribosomal subunit. Interacts with L10 and the large rRNA to form the base of the stalk. L10 forms an elongated spine to which L12 dimers bind in a sequential fashion forming a multimeric L10(L12)X complex. In terms of processing, one or more lysine residues are methylated.

Functionally, forms part of the ribosomal stalk which helps the ribosome interact with GTP-bound translation factors. The sequence is that of Large ribosomal subunit protein uL11 from Nocardia farcinica (strain IFM 10152).